Here is a 428-residue protein sequence, read N- to C-terminus: CinA-like protein (428 aa).

The protein belongs to the CinA family.

The chain is CinA-like protein from Chlorobium phaeovibrioides (strain DSM 265 / 1930) (Prosthecochloris vibrioformis (strain DSM 265)).